Consider the following 334-residue polypeptide: Glycerol-3-phosphate dehydrogenase [NAD(P)+] (334 aa).

Positions 10, 11, 31, 32, and 105 each coordinate NADPH. 3 residues coordinate sn-glycerol 3-phosphate: Lys-105, Gly-136, and Ser-138. NADPH is bound at residue Ala-140. Lys-191, Asp-244, Ser-254, Arg-255, and Asn-256 together coordinate sn-glycerol 3-phosphate. Lys-191 acts as the Proton acceptor in catalysis. Arg-255 contributes to the NADPH binding site. The NADPH site is built by Val-279 and Glu-281.

Belongs to the NAD-dependent glycerol-3-phosphate dehydrogenase family.

It is found in the cytoplasm. The enzyme catalyses sn-glycerol 3-phosphate + NAD(+) = dihydroxyacetone phosphate + NADH + H(+). It catalyses the reaction sn-glycerol 3-phosphate + NADP(+) = dihydroxyacetone phosphate + NADPH + H(+). Its pathway is membrane lipid metabolism; glycerophospholipid metabolism. Catalyzes the reduction of the glycolytic intermediate dihydroxyacetone phosphate (DHAP) to sn-glycerol 3-phosphate (G3P), the key precursor for phospholipid synthesis. This chain is Glycerol-3-phosphate dehydrogenase [NAD(P)+], found in Chlorobium phaeobacteroides (strain BS1).